The primary structure comprises 636 residues: Putative ankyrin repeat protein L766 (636 aa).

ANK repeat units lie at residues 63 to 97, 99 to 129, 130 to 159, 161 to 190, 230 to 259, 261 to 284, 322 to 355, 372 to 400, 425 to 455, 517 to 546, and 548 to 575; these read NNYL…DYEL, STCH…YIDS, FGNI…FFNC, YYYL…KSNN, FDEK…NYDF, TIIN…YLTD, SRII…KTSI, NPDE…NIPD, DSLE…DTTI, NSIE…NDNN, and LSWA…DIYQ.

This Acanthamoeba polyphaga mimivirus (APMV) protein is Putative ankyrin repeat protein L766.